A 303-amino-acid chain; its full sequence is Elongation factor Ts (303 aa).

The tract at residues 81–84 is involved in Mg(2+) ion dislocation from EF-Tu; sequence TDFV.

It belongs to the EF-Ts family.

The protein localises to the cytoplasm. Its function is as follows. Associates with the EF-Tu.GDP complex and induces the exchange of GDP to GTP. It remains bound to the aminoacyl-tRNA.EF-Tu.GTP complex up to the GTP hydrolysis stage on the ribosome. The polypeptide is Elongation factor Ts (Mesomycoplasma hyopneumoniae (strain 7448) (Mycoplasma hyopneumoniae)).